The primary structure comprises 348 residues: Phosphatidylglycerophosphate phosphatase 1, chloroplastic/mitochondrial (348 aa).

A chloroplast and mitochondrion-targeting transit peptide spans 1–58; the sequence is MQTPSMAASTTSYYPIPKSFLLSPPRHKRNPNLISCSTKPICSPPPPSSSSSSPLQTT. A disordered region spans residues 17-67; the sequence is PKSFLLSPPRHKRNPNLISCSTKPICSPPPPSSSSSSPLQTTTTHRSQKQN. Positions 55-67 are enriched in polar residues; the sequence is LQTTTTHRSQKQN. The Phosphoryl acceptor motif lies at 184–188; the sequence is DKDNT.

This sequence belongs to the HAD-like hydrolase superfamily. Requires Mg(2+) as cofactor. In terms of tissue distribution, mainly expressed in inflorescences (especially in pollen) and, to a lower extent, in leaves, stems and siliques, as well as, at low levels, in roots. Mostly expressed in hypocotyl, vasculatures, trichomes, guard cells and stigmas.

Its subcellular location is the plastid. The protein resides in the chloroplast. It is found in the mitochondrion. The enzyme catalyses a 1,2-diacyl-sn-glycero-3-phospho-(1'-sn-glycero-3'-phosphate) + H2O = a 1,2-diacyl-sn-glycero-3-phospho-(1'-sn-glycerol) + phosphate. The protein operates within phospholipid metabolism; phosphatidylglycerol biosynthesis; phosphatidylglycerol from CDP-diacylglycerol: step 2/2. Its function is as follows. Phosphatidylglycerophosphate (PGP) phosphatase involved in the biosynthesis of phosphatidylglycerol (PG), a phosphoglycerolipid predominantly present in chloroplastic thylakoid membranes and which has important photosynthetic function; seems to use PGP 34:3, PGP 34:2 and PGP 34:1 as substrates. Required for thylakoid membranes development and chloroplast function. Necessary for normal cell growth. Required for root growth and columella cells organization. This chain is Phosphatidylglycerophosphate phosphatase 1, chloroplastic/mitochondrial, found in Arabidopsis thaliana (Mouse-ear cress).